We begin with the raw amino-acid sequence, 93 residues long: Cell division protein CrgA (93 aa).

Transmembrane regions (helical) follow at residues 31–51 (VWFVSLFIGLMLIGLIWLMVF) and 70–90 (LGPWNYAIAFAFMITGLLLTM).

This sequence belongs to the CrgA family.

The protein localises to the cell membrane. In terms of biological role, involved in cell division. This chain is Cell division protein CrgA, found in Mycobacterium bovis (strain ATCC BAA-935 / AF2122/97).